Consider the following 512-residue polypeptide: MAKNVAIFGLLFSLLLLVPSQIFAEESSTDAKEFVLTLDNTNFHDTVKKHDFIVVEFYAPWCGHCKKLAPEYEKAASILSTHEPPVVLAKVDANEEHNKDLASENDVKGFPTIKIFRNGGKNIQEYKGPREAEGIVEYLKKQSGPASTEIKSADDATAFVGDNKVVIVGVFPKFSGEEYDNFIALAEKLRSDYDFAHTLNAKHLPKGDSSVSGPVVRLFKPFDELFVDSKDFNVEALEKFIEESSTPIVTVFNNEPSNHPFVVKFFNSPNAKAMLFINFTTEGAESFKTKYHEVAEQYKQQGVSFLVGDVESSQGAFQYFGLKEEQVPLIIIQHNDGKKFFKPNLELDQLPTWLKAYKDGKVEPFVKSEPIPETNNEPVKVVVGQTLEDVVFKSGKNVLIEFYAPWCGHCKQLAPILDEVAVSFQSDADVVIAKLDATANDIPTDTFDVQGYPTLYFRSASGKLSQYDGGRTKEDIIEFIEKNKDKTGAAHQEVEQPKAAAQPEAEQPKDEL.

The signal sequence occupies residues M1–A24. Residues E25–G144 form the Thioredoxin 1 domain. Active-site nucleophile residues include C62 and C65. C62 and C65 form a disulfide bridge. N278 carries N-linked (GlcNAc...) asparagine glycosylation. The region spanning Y357–D485 is the Thioredoxin 2 domain. Active-site nucleophile residues include C407 and C410. Residues C407 and C410 are joined by a disulfide bond. A compositionally biased stretch (basic and acidic residues) spans T487–Q496. Residues T487–L512 are disordered. Positions K509–L512 match the Prevents secretion from ER motif.

It belongs to the protein disulfide isomerase family.

It is found in the endoplasmic reticulum lumen. It catalyses the reaction Catalyzes the rearrangement of -S-S- bonds in proteins.. Participates in the folding of proteins containing disulfide bonds, may be involved in glycosylation, prolyl hydroxylation and triglyceride transfer. The sequence is that of Protein disulfide-isomerase (PDI) from Medicago sativa (Alfalfa).